Reading from the N-terminus, the 137-residue chain is MGFGATLAVGLTIFVLSVVTIIICFTCSCCCLYKTCRRPRPVVTTTTSTTVVHAPYPQPPSVPPSYPGPSYQGYHTMPPQPGMPAAPYPMQYPPPYPAQPMGPPAYHETLAGGAAAPYPASQPPYNPAYMDAPKAAL.

The helical transmembrane segment at Phe-3 to Ile-23 threads the bilayer.

The protein belongs to the shisa family. As to quaternary structure, interacts with PDCD6; PDCD6 can stabilize SHISA5.

The protein localises to the endoplasmic reticulum membrane. Its subcellular location is the nucleus membrane. Can induce apoptosis in a caspase-dependent manner and plays a role in p53/TP53-dependent apoptosis. In Pongo abelii (Sumatran orangutan), this protein is Protein shisa-5 (SHISA5).